The chain runs to 197 residues: Adenylate kinase (197 aa).

12 to 17 (GSGKTT) is a binding site for ATP. Positions 34 to 63 (STGDMLREEVASGSELGKTIESYIAKGALV) are NMP. Residues threonine 35, arginine 40, 61 to 63 (ALV), 88 to 91 (GYPR), and glutamine 95 contribute to the AMP site. The tract at residues 130–144 (GRRAEAAPGEERSDD) is LID. Arginine 131 contacts ATP. Residues arginine 141 and arginine 152 each coordinate AMP. ATP is bound at residue arginine 180.

It belongs to the adenylate kinase family. Monomer.

The protein resides in the cytoplasm. The enzyme catalyses AMP + ATP = 2 ADP. It participates in purine metabolism; AMP biosynthesis via salvage pathway; AMP from ADP: step 1/1. Catalyzes the reversible transfer of the terminal phosphate group between ATP and AMP. Plays an important role in cellular energy homeostasis and in adenine nucleotide metabolism. This chain is Adenylate kinase, found in Sulfurovum sp. (strain NBC37-1).